We begin with the raw amino-acid sequence, 118 residues long: Beta-2-microglobulin (118 aa).

Positions 1 to 20 (MAPLVALVLLGLLSLSGLDA) are cleaved as a signal peptide. The Ig-like C1-type domain maps to 25–112 (PKVQVYSRHP…HVTLDKPKIV (88 aa)). A disulfide bridge links Cys45 with Cys99.

This sequence belongs to the beta-2-microglobulin family. In terms of assembly, heterodimer of an alpha chain and a beta chain. Beta-2-microglobulin is the beta-chain of major histocompatibility complex class I molecules.

It localises to the secreted. In terms of biological role, component of the class I major histocompatibility complex (MHC). Involved in the presentation of peptide antigens to the immune system. The chain is Beta-2-microglobulin (B2M) from Sus scrofa (Pig).